A 457-amino-acid polypeptide reads, in one-letter code: Zinc finger protein ZPR1 (457 aa).

Positions 1 to 13 are enriched in polar residues; the sequence is MSTVSDPNSSNPP. The disordered stretch occupies residues 1 to 21; sequence MSTVSDPNSSNPPESAGNIRP. 2 C4-type zinc fingers span residues 43–75 and 261–293; these read CMNC…CDHC and CPSC…CGAC. The tract at residues 414–457 is disordered; it reads VQSLSDDDSEPDDKLTVERYDRSYEDNEDLGLNDMKTEGYEEKA. 2 stretches are compositionally biased toward basic and acidic residues: residues 425 to 438 and 448 to 457; these read DDKL…RSYE and MKTEGYEEKA.

The protein belongs to the ZPR1 family.

Might mediate EGFR and FGFR signal transduction cascades required for lumen formation in tracheal cells. The sequence is that of Zinc finger protein ZPR1 from Drosophila melanogaster (Fruit fly).